Consider the following 245-residue polypeptide: Type II restriction enzyme MjaIV (245 aa).

It carries out the reaction Endonucleolytic cleavage of DNA to give specific double-stranded fragments with terminal 5'-phosphates.. Its function is as follows. A P subtype restriction enzyme that recognizes the double-stranded sequence 5'-GTNNAC-3'; the cleavage site is unknown. This Methanocaldococcus jannaschii (strain ATCC 43067 / DSM 2661 / JAL-1 / JCM 10045 / NBRC 100440) (Methanococcus jannaschii) protein is Type II restriction enzyme MjaIV (mjaIVR).